Here is a 225-residue protein sequence, read N- to C-terminus: Cytidylate kinase (225 aa).

12–20 (GPSGAGKGT) provides a ligand contact to ATP.

This sequence belongs to the cytidylate kinase family. Type 1 subfamily.

It is found in the cytoplasm. The catalysed reaction is CMP + ATP = CDP + ADP. It catalyses the reaction dCMP + ATP = dCDP + ADP. The sequence is that of Cytidylate kinase from Pectobacterium carotovorum subsp. carotovorum (strain PC1).